Here is a 418-residue protein sequence, read N- to C-terminus: Serine/threonine-protein kinase PCRK1 (418 aa).

Residues 36–63 (GSEFNSRDVSGTSTESSMGRKNSYPPVS) form a disordered region. One can recognise a Protein kinase domain in the interval 84–369 (FSRSVMIGEG…EVLEMVNKIV (286 aa)). ATP contacts are provided by residues 90–98 (IGEGGFGCV) and Lys118. Catalysis depends on Asp218, which acts as the Proton acceptor. Residues Ser373, Ser377, and Ser385 each carry the phosphoserine modification.

It belongs to the protein kinase superfamily. Ser/Thr protein kinase family. In terms of assembly, interacts with FLS2.

The protein resides in the cell membrane. It carries out the reaction L-seryl-[protein] + ATP = O-phospho-L-seryl-[protein] + ADP + H(+). It catalyses the reaction L-threonyl-[protein] + ATP = O-phospho-L-threonyl-[protein] + ADP + H(+). In terms of biological role, involved in the activation of early immune responses. Plays a role in pattern-triggered immunity (PTI) induced by pathogen-associated molecular patterns (PAMPs) and damage-associated molecular patterns (DAMPs). Contributes to PTI in response to the bacterial pathogen Pseudomonas syringae pv maculicola strain ES4326. Contributes to PTI in response to the bacterial pathogen Pseudomonas syringae pv tomato strain DC3000. Functions redundantly with PCRK2 in basal resistance against bacterial pathogens and in regulation of plant immunity. Functions together with PCRK2 downstream of the PAMP receptor FLS2. Contributes to the induction of SARD1 and CBP60G, which are transcriptional activator of ICS1, an enzyme involved in salicylate (SA) biosynthesis upon pathogen attack. The chain is Serine/threonine-protein kinase PCRK1 from Arabidopsis thaliana (Mouse-ear cress).